Consider the following 314-residue polypeptide: BURP domain-containing protein 8 (314 aa).

An N-terminal signal peptide occupies residues 1 to 16 (MDLVRLTSLLPPSVMG). Residues 98-314 (FFLEKDLFPG…PLGDMLWVRN (217 aa)) enclose the BURP domain.

As to expression, expressed in shoot and panicles.

This chain is BURP domain-containing protein 8 (BURP8), found in Oryza sativa subsp. japonica (Rice).